We begin with the raw amino-acid sequence, 363 residues long: GTPase Obg (363 aa).

The 159-residue stretch at 1 to 159 (MKFVDEAFID…KSLKLELKVL (159 aa)) folds into the Obg domain. One can recognise an OBG-type G domain in the interval 160–341 (ADVGLLGRPN…LVHAIFGHVQ (182 aa)). Residues 166–173 (GRPNAGKS), 191–195 (FTTLH), 213–216 (DIPG), 291–294 (NKLD), and 322–324 (SAL) each bind GTP. Mg(2+)-binding residues include Ser-173 and Thr-193. Positions 343 to 363 (GQRMDNEPPPLDPRFASAGPA) are disordered.

The protein belongs to the TRAFAC class OBG-HflX-like GTPase superfamily. OBG GTPase family. Monomer. Mg(2+) is required as a cofactor.

The protein localises to the cytoplasm. Its function is as follows. An essential GTPase which binds GTP, GDP and possibly (p)ppGpp with moderate affinity, with high nucleotide exchange rates and a fairly low GTP hydrolysis rate. Plays a role in control of the cell cycle, stress response, ribosome biogenesis and in those bacteria that undergo differentiation, in morphogenesis control. The polypeptide is GTPase Obg (Verminephrobacter eiseniae (strain EF01-2)).